Here is a 600-residue protein sequence, read N- to C-terminus: Ligand-dependent nuclear receptor corepressor-like protein (600 aa).

Disordered regions lie at residues 1–24 (MEKG…QCRS), 102–122 (SVIG…GQSN), and 495–519 (DGTS…KRGR). A compositionally biased stretch (polar residues) spans 104 to 122 (IGSSQSTPTEELSSQGQSN). Positions 514–566 (RKKRGRYRQYDHEIMEEAIAMVMSGKMSVSKAQGIYGVPHSTLEYKVKERSGT) constitute an HTH psq-type domain. Residues 542-562 (VSKAQGIYGVPHSTLEYKVKE) constitute a DNA-binding region (H-T-H motif). A disordered region spans residues 581–600 (GLFNMTDSGTGSCKTSSKPV). The segment covering 583–600 (FNMTDSGTGSCKTSSKPV) has biased composition (polar residues).

The protein resides in the nucleus. May act as transcription activator that binds DNA elements with the sequence 5'-CCCTATCGATCGATCTCTACCT-3'. This is Ligand-dependent nuclear receptor corepressor-like protein (LCORL) from Gallus gallus (Chicken).